A 360-amino-acid polypeptide reads, in one-letter code: MKPSIISKLDSLNERYEELEALLGDASVISDQDKFRAYSKEYSQLEEVVKTFSRWKQLNSNIEEAELLLDDPEMKEMAQMEIEESKNELEEVEQHLQILLLPRDPNDEYNAYLEIRAGTGGDEAGIFAGDLFRMYSRYAEMKRWRVEVLSENESEQGGYKEIIALVSGDNVYGQLKFESGGHRVQRVPKTESQGRIHTSACTVAVMPELPESEMPEINPADLRIDTYRASGAGGQHINKTDSAVRITHIPTGMVVECQDERSQHKNKAKALAVLASRLVQAEQDKLAAEQATTRRNLLGSGDRSDKIRTYNYPQGRVTDHRINLTVYRLDEVMNGKIDELIQPIITEYQADQLAALSDQP.

Glutamine 235 is modified (N5-methylglutamine).

The protein belongs to the prokaryotic/mitochondrial release factor family. Methylated by PrmC. Methylation increases the termination efficiency of RF1.

The protein localises to the cytoplasm. Peptide chain release factor 1 directs the termination of translation in response to the peptide chain termination codons UAG and UAA. The protein is Peptide chain release factor 1 of Mannheimia succiniciproducens (strain KCTC 0769BP / MBEL55E).